A 253-amino-acid polypeptide reads, in one-letter code: Ubiquinone/menaquinone biosynthesis C-methyltransferase UbiE (253 aa).

S-adenosyl-L-methionine-binding positions include Thr76, Asp97, and 125-126 (NA).

Belongs to the class I-like SAM-binding methyltransferase superfamily. MenG/UbiE family.

The enzyme catalyses a 2-demethylmenaquinol + S-adenosyl-L-methionine = a menaquinol + S-adenosyl-L-homocysteine + H(+). It carries out the reaction a 2-methoxy-6-(all-trans-polyprenyl)benzene-1,4-diol + S-adenosyl-L-methionine = a 5-methoxy-2-methyl-3-(all-trans-polyprenyl)benzene-1,4-diol + S-adenosyl-L-homocysteine + H(+). It functions in the pathway quinol/quinone metabolism; menaquinone biosynthesis; menaquinol from 1,4-dihydroxy-2-naphthoate: step 2/2. Its pathway is cofactor biosynthesis; ubiquinone biosynthesis. Its function is as follows. Methyltransferase required for the conversion of demethylmenaquinol (DMKH2) to menaquinol (MKH2) and the conversion of 2-polyprenyl-6-methoxy-1,4-benzoquinol (DDMQH2) to 2-polyprenyl-3-methyl-6-methoxy-1,4-benzoquinol (DMQH2). The polypeptide is Ubiquinone/menaquinone biosynthesis C-methyltransferase UbiE (Stenotrophomonas maltophilia (strain R551-3)).